Here is a 368-residue protein sequence, read N- to C-terminus: DNA replication and repair protein RecF (368 aa).

G30 to T37 serves as a coordination point for ATP.

The protein belongs to the RecF family.

The protein resides in the cytoplasm. In terms of biological role, the RecF protein is involved in DNA metabolism; it is required for DNA replication and normal SOS inducibility. RecF binds preferentially to single-stranded, linear DNA. It also seems to bind ATP. The sequence is that of DNA replication and repair protein RecF from Trichlorobacter lovleyi (strain ATCC BAA-1151 / DSM 17278 / SZ) (Geobacter lovleyi).